The chain runs to 35 residues: Probable protein L3 (35 aa).

This chain is Probable protein L3, found in Odocoileus virginianus papillomavirus 1 (DPV).